A 223-amino-acid chain; its full sequence is Ras-related protein Rab-37 (223 aa).

Over residues 1–13 (MTGTPGAATAGDG) the composition is skewed to low complexity. Positions 1–22 (MTGTPGAATAGDGEAPERSPPF) are disordered. At Thr-2 the chain carries N-acetylthreonine. Residues Ser-38, Gly-39, Val-40, Gly-41, Lys-42, Thr-43, Cys-44, and Thr-62 each contribute to the GTP site. Thr-43 is a binding site for Mg(2+). 2 short sequence motifs (switch) span residues 52–67 (GAFL…GIDS) and 85–102 (DTAG…YYRD). Residues Thr-62 and Asp-85 each contribute to the Mg(2+) site. GTP-binding residues include Gly-88, Asn-143, Lys-144, Asp-146, Ser-173, Ala-174, and Lys-175. Residues Cys-219 and Cys-220 are each lipidated (S-geranylgeranyl cysteine). Position 220 is a cysteine methyl ester (Cys-220). Residues 221–223 (SFV) constitute a propeptide, removed in mature form.

This sequence belongs to the small GTPase superfamily. Rab family. As to quaternary structure, interacts with RIMS1. Interacts (in GDP-bound form) with RPGR, RPGR functions as guanine exchange factor (GEF). Mg(2+) is required as a cofactor. As to expression, expressed in the retina (at protein level). Specifically expressed in the bone marrow mast cells.

It is found in the cytoplasmic vesicle. It localises to the cell projection. The protein localises to the cilium. The catalysed reaction is GTP + H2O = GDP + phosphate + H(+). Its activity is regulated as follows. Regulated by guanine nucleotide exchange factors (GEFs) including RPGR which promote the exchange of bound GDP for free GTP. Regulated by GTPase activating proteins (GAPs) which increase the GTP hydrolysis activity. Inhibited by GDP dissociation inhibitors (GDIs). In terms of biological role, the small GTPases Rab are key regulators of intracellular membrane trafficking, from the formation of transport vesicles to their fusion with membranes. Rabs cycle between an inactive GDP-bound form and an active GTP-bound form that is able to recruit to membranes different sets of downstream effectors directly responsible for vesicle formation, movement, tethering and fusion. Acts as an organizer for autophagosome biogenesis in a GTP-dependent manner. Involved in retinal homeostasis by autophagy regulation. The chain is Ras-related protein Rab-37 from Mus musculus (Mouse).